The sequence spans 492 residues: Bifunctional purine biosynthesis protein PurH (492 aa).

The MGS-like domain occupies M1–V144.

Belongs to the PurH family.

The enzyme catalyses (6R)-10-formyltetrahydrofolate + 5-amino-1-(5-phospho-beta-D-ribosyl)imidazole-4-carboxamide = 5-formamido-1-(5-phospho-D-ribosyl)imidazole-4-carboxamide + (6S)-5,6,7,8-tetrahydrofolate. It carries out the reaction IMP + H2O = 5-formamido-1-(5-phospho-D-ribosyl)imidazole-4-carboxamide. It functions in the pathway purine metabolism; IMP biosynthesis via de novo pathway; 5-formamido-1-(5-phospho-D-ribosyl)imidazole-4-carboxamide from 5-amino-1-(5-phospho-D-ribosyl)imidazole-4-carboxamide (10-formyl THF route): step 1/1. The protein operates within purine metabolism; IMP biosynthesis via de novo pathway; IMP from 5-formamido-1-(5-phospho-D-ribosyl)imidazole-4-carboxamide: step 1/1. This is Bifunctional purine biosynthesis protein PurH from Staphylococcus carnosus (strain TM300).